We begin with the raw amino-acid sequence, 247 residues long: Eukaryotic translation initiation factor 6 (247 aa).

Ser174 and Ser175 each carry phosphoserine; by CK1.

Belongs to the eIF-6 family. Monomer. Associates with the 60S ribosomal subunit. Post-translationally, phosphorylation at Ser-174 and Ser-175 promotes nuclear export.

The protein localises to the cytoplasm. The protein resides in the nucleus. Its subcellular location is the nucleolus. Its function is as follows. Binds to the 60S ribosomal subunit and prevents its association with the 40S ribosomal subunit to form the 80S initiation complex in the cytoplasm. Is also involved in ribosome biogenesis. Associates with pre-60S subunits in the nucleus and is involved in its nuclear export. In Emericella nidulans (strain FGSC A4 / ATCC 38163 / CBS 112.46 / NRRL 194 / M139) (Aspergillus nidulans), this protein is Eukaryotic translation initiation factor 6 (tif6).